The primary structure comprises 298 residues: uncharacterized protein (298 aa).

This sequence to M.tuberculosis Rv1486c, M.bovis Mb1522c and M.avium MAV321.

This is an uncharacterized protein from Mycobacterium leprae (strain TN).